The following is a 485-amino-acid chain: Glycogen synthase (485 aa).

Lys-21 is an ADP-alpha-D-glucose binding site.

The protein belongs to the glycosyltransferase 1 family. Bacterial/plant glycogen synthase subfamily.

The enzyme catalyses [(1-&gt;4)-alpha-D-glucosyl](n) + ADP-alpha-D-glucose = [(1-&gt;4)-alpha-D-glucosyl](n+1) + ADP + H(+). The protein operates within glycan biosynthesis; glycogen biosynthesis. In terms of biological role, synthesizes alpha-1,4-glucan chains using ADP-glucose. This chain is Glycogen synthase, found in Pseudomonas savastanoi pv. phaseolicola (strain 1448A / Race 6) (Pseudomonas syringae pv. phaseolicola (strain 1448A / Race 6)).